Here is a 270-residue protein sequence, read N- to C-terminus: Aliphatic sulfonates import ATP-binding protein SsuB 2 (270 aa).

One can recognise an ABC transporter domain in the interval 17-241; the sequence is LLDLRIARKL…PRDRRDPSLA (225 aa). 50 to 57 lines the ATP pocket; sequence GPSGCGKS.

The protein belongs to the ABC transporter superfamily. Aliphatic sulfonates importer (TC 3.A.1.17.2) family. In terms of assembly, the complex is composed of two ATP-binding proteins (SsuB), two transmembrane proteins (SsuC) and a solute-binding protein (SsuA).

The protein localises to the cell inner membrane. It catalyses the reaction ATP + H2O + aliphatic sulfonate-[sulfonate-binding protein]Side 1 = ADP + phosphate + aliphatic sulfonateSide 2 + [sulfonate-binding protein]Side 1.. In terms of biological role, part of the ABC transporter complex SsuABC involved in aliphatic sulfonates import. Responsible for energy coupling to the transport system. The sequence is that of Aliphatic sulfonates import ATP-binding protein SsuB 2 from Burkholderia cenocepacia (strain HI2424).